A 354-amino-acid chain; its full sequence is 3-dehydroquinate synthase (354 aa).

Residues 100-104, 124-125, K136, K145, and 163-166 each bind NAD(+); these read GATGD, TT, and FLKT. Positions 178, 242, and 256 each coordinate Zn(2+).

The protein belongs to the sugar phosphate cyclases superfamily. Dehydroquinate synthase family. The cofactor is NAD(+). Co(2+) serves as cofactor. It depends on Zn(2+) as a cofactor.

It localises to the cytoplasm. The enzyme catalyses 7-phospho-2-dehydro-3-deoxy-D-arabino-heptonate = 3-dehydroquinate + phosphate. Its pathway is metabolic intermediate biosynthesis; chorismate biosynthesis; chorismate from D-erythrose 4-phosphate and phosphoenolpyruvate: step 2/7. Its function is as follows. Catalyzes the conversion of 3-deoxy-D-arabino-heptulosonate 7-phosphate (DAHP) to dehydroquinate (DHQ). The protein is 3-dehydroquinate synthase of Staphylococcus aureus (strain COL).